The sequence spans 393 residues: Phosphoglycerate kinase (393 aa).

Residues 21–23, arginine 36, 59–62, arginine 118, and arginine 151 contribute to the substrate site; these read DFN and HLGR. ATP is bound by residues lysine 201, glutamate 323, and 349-352; that span reads GGDS.

The protein belongs to the phosphoglycerate kinase family. As to quaternary structure, monomer.

Its subcellular location is the cytoplasm. The enzyme catalyses (2R)-3-phosphoglycerate + ATP = (2R)-3-phospho-glyceroyl phosphate + ADP. The protein operates within carbohydrate degradation; glycolysis; pyruvate from D-glyceraldehyde 3-phosphate: step 2/5. In Moorella thermoacetica (strain ATCC 39073 / JCM 9320), this protein is Phosphoglycerate kinase.